Consider the following 420-residue polypeptide: 4-hydroxy-3-methylbut-2-en-1-yl diphosphate synthase (flavodoxin) (420 aa).

Cys307, Cys310, Cys353, and Glu360 together coordinate [4Fe-4S] cluster.

The protein belongs to the IspG family. Requires [4Fe-4S] cluster as cofactor.

It carries out the reaction (2E)-4-hydroxy-3-methylbut-2-enyl diphosphate + oxidized [flavodoxin] + H2O + 2 H(+) = 2-C-methyl-D-erythritol 2,4-cyclic diphosphate + reduced [flavodoxin]. Its pathway is isoprenoid biosynthesis; isopentenyl diphosphate biosynthesis via DXP pathway; isopentenyl diphosphate from 1-deoxy-D-xylulose 5-phosphate: step 5/6. Its function is as follows. Converts 2C-methyl-D-erythritol 2,4-cyclodiphosphate (ME-2,4cPP) into 1-hydroxy-2-methyl-2-(E)-butenyl 4-diphosphate. This Brucella melitensis biotype 2 (strain ATCC 23457) protein is 4-hydroxy-3-methylbut-2-en-1-yl diphosphate synthase (flavodoxin).